A 511-amino-acid polypeptide reads, in one-letter code: Inositol-3-phosphate synthase isozyme 1 (511 aa).

The NAD(+) site is built by G71, G72, N73, N74, D144, I181, Q191, R194, T231, A232, N233, T234, G282, S283, D307, S310, N341, N342, D343, K356, A394, D395, D423, and S424.

Belongs to the myo-inositol 1-phosphate synthase family. In terms of assembly, homotrimer or homotetramer. Interacts with ATXR5 and ATXR6. NAD(+) serves as cofactor. In terms of tissue distribution, expressed in siliques, leaves, roots, seed endosperm, but not in embryos. Highest expression in leaves, but restricted to vascular tissue in older leaves.

Its subcellular location is the cytoplasm. The protein resides in the cytosol. The protein localises to the nucleus. The catalysed reaction is D-glucose 6-phosphate = 1D-myo-inositol 3-phosphate. It participates in polyol metabolism; myo-inositol biosynthesis; myo-inositol from D-glucose 6-phosphate: step 1/2. Its function is as follows. Key enzyme in myo-inositol biosynthesis pathway that catalyzes the conversion of glucose 6-phosphate to 1-myo-inositol 1-phosphate in a NAD-dependent manner. Catalyzes the majority of myo-inositol synthesis required for plant growth and development. Acts as a repressor of programmed cell death and protects plant cells against cell death under high light intensity or long days. Controls its own transcription by inhibiting ATXR6 activity. Reduces the deposition of inhibitory histone marks on its own promoter. The sequence is that of Inositol-3-phosphate synthase isozyme 1 (IPS1) from Arabidopsis thaliana (Mouse-ear cress).